Consider the following 516-residue polypeptide: Squalene epoxidase 4 (516 aa).

The next 2 helical transmembrane spans lie at 2-22 and 43-63; these read TYAWLWTLLAFVLTWMVFHLI and ATDVIIVGAGVAGASLAYALA. FAD is bound by residues 53 to 54, 73 to 74, R81, R153, V169, D335, and M348; these read VA and ER. A helical membrane pass occupies residues 435-455; sequence ILGGMNPHPLTLVLHLVAITL.

Belongs to the squalene monooxygenase family. Requires FAD as cofactor. Expressed mainly in seedlings and inflorescences.

The protein resides in the membrane. The enzyme catalyses squalene + reduced [NADPH--hemoprotein reductase] + O2 = (S)-2,3-epoxysqualene + oxidized [NADPH--hemoprotein reductase] + H2O + H(+). It participates in terpene metabolism; lanosterol biosynthesis; lanosterol from farnesyl diphosphate: step 2/3. Its function is as follows. Catalyzes the stereospecific oxidation of squalene to (S)-2,3-epoxysqualene, and is considered to be a rate-limiting enzyme in steroid biosynthesis. In Arabidopsis thaliana (Mouse-ear cress), this protein is Squalene epoxidase 4 (SQE4).